The primary structure comprises 60 residues: Metallothionein A (60 aa).

The beta stretch occupies residues 1-28 (MDPCQCSKSGTCNCGGSCTCTNCSCKSC). Residues cysteine 4, cysteine 6, cysteine 12, cysteine 14, cysteine 18, cysteine 20, cysteine 23, cysteine 25, cysteine 28, cysteine 32, cysteine 33, cysteine 35, cysteine 36, cysteine 40, cysteine 43, cysteine 47, cysteine 49, cysteine 54, cysteine 58, and cysteine 59 each contribute to the a divalent metal cation site. The tract at residues 29–60 (KKSCCPCCPSGCTKCASGCVCKGKTCDTSCCQ) is alpha.

The protein belongs to the metallothionein superfamily. Type 1 family.

Functionally, metallothioneins have a high content of cysteine residues that bind various heavy metals. In Trematomus bernacchii (Emerald rockcod), this protein is Metallothionein A (mta).